A 194-amino-acid polypeptide reads, in one-letter code: SSVNARPCSSPLVCPAKGENFFGVGNVARIRRLPPHLAWCSIDWDQLCLLHLLGSGGFGSVYKAIYHGATVAVKKVKRCSKNHLASRQSFWAELNVARLGHNNVVRIVAASTCTPASQDSLGTIIMEYAGNCTLHHVIYGTGYLTGNNSDSLKCDHGFLSTAQAVIYSHDIVAGLMFLHSQLIVHLDLKPANIF.

One can recognise a Protein kinase domain in the interval 47 to 194 (LCLLHLLGSG…HLDLKPANIF (148 aa)). Residues 53–61 (LGSGGFGSV) and Lys74 each bind ATP. Catalysis depends on Asp187, which acts as the Proton acceptor.

Belongs to the protein kinase superfamily. Ser/Thr protein kinase family.

The catalysed reaction is L-seryl-[protein] + ATP = O-phospho-L-seryl-[protein] + ADP + H(+). It catalyses the reaction L-threonyl-[protein] + ATP = O-phospho-L-threonyl-[protein] + ADP + H(+). This Atheris squamigera (Variable bush viper) protein is Serine/threonine-protein kinase mos (MOS).